A 346-amino-acid chain; its full sequence is Dihydroorotase (346 aa).

Zn(2+) contacts are provided by H13 and H15. Substrate-binding positions include 15 to 17 (HLR) and N41. Zn(2+) is bound by residues K99, H136, and H174. K99 is subject to N6-carboxylysine. H136 provides a ligand contact to substrate. L219 contacts substrate. D247 contributes to the Zn(2+) binding site. Residue D247 is part of the active site. The substrate site is built by H251 and A263.

The protein belongs to the metallo-dependent hydrolases superfamily. DHOase family. Class II DHOase subfamily. Homodimer. It depends on Zn(2+) as a cofactor.

It carries out the reaction (S)-dihydroorotate + H2O = N-carbamoyl-L-aspartate + H(+). The protein operates within pyrimidine metabolism; UMP biosynthesis via de novo pathway; (S)-dihydroorotate from bicarbonate: step 3/3. Catalyzes the reversible cyclization of carbamoyl aspartate to dihydroorotate. The sequence is that of Dihydroorotase from Chelativorans sp. (strain BNC1).